The sequence spans 192 residues: Transcription termination/antitermination protein NusG (192 aa).

This sequence belongs to the NusG family.

Functionally, participates in transcription elongation, termination and antitermination. This is Transcription termination/antitermination protein NusG from Rickettsia prowazekii (strain Madrid E).